The sequence spans 612 residues: Dihydroxy-acid dehydratase (612 aa).

D81 is a Mg(2+) binding site. C122 contacts [2Fe-2S] cluster. The Mg(2+) site is built by D123 and K124. The residue at position 124 (K124) is an N6-carboxylysine. Residue C195 participates in [2Fe-2S] cluster binding. Mg(2+) is bound at residue E491. The active-site Proton acceptor is S517.

This sequence belongs to the IlvD/Edd family. In terms of assembly, homodimer. [2Fe-2S] cluster serves as cofactor. Mg(2+) is required as a cofactor.

It carries out the reaction (2R)-2,3-dihydroxy-3-methylbutanoate = 3-methyl-2-oxobutanoate + H2O. The enzyme catalyses (2R,3R)-2,3-dihydroxy-3-methylpentanoate = (S)-3-methyl-2-oxopentanoate + H2O. The protein operates within amino-acid biosynthesis; L-isoleucine biosynthesis; L-isoleucine from 2-oxobutanoate: step 3/4. It participates in amino-acid biosynthesis; L-valine biosynthesis; L-valine from pyruvate: step 3/4. Functions in the biosynthesis of branched-chain amino acids. Catalyzes the dehydration of (2R,3R)-2,3-dihydroxy-3-methylpentanoate (2,3-dihydroxy-3-methylvalerate) into 2-oxo-3-methylpentanoate (2-oxo-3-methylvalerate) and of (2R)-2,3-dihydroxy-3-methylbutanoate (2,3-dihydroxyisovalerate) into 2-oxo-3-methylbutanoate (2-oxoisovalerate), the penultimate precursor to L-isoleucine and L-valine, respectively. In Bartonella henselae (strain ATCC 49882 / DSM 28221 / CCUG 30454 / Houston 1) (Rochalimaea henselae), this protein is Dihydroxy-acid dehydratase.